We begin with the raw amino-acid sequence, 243 residues long: MANVSMRDMLQAGVHFGHQTRYWNPKMKPFIFGARNKVHIINLEKTVPLFNNALNYIGSVASKKGKILFVGTKRAASDSVRDAAVKCDQFYVNKRWLGGMLTNWKTVRQSIKRLKDLEQQSQDGTFDKITKKEVLMLQREMAKLENSLGGIKNMGGLPDCLFVVDADHEHIAITEARNLGIPVVSIVDTNSNPDGVDYIIPGNDDAIRAVQLYLNSAADAVIEGREKNIEVQAEEGEFVEAAE.

Belongs to the universal ribosomal protein uS2 family.

The chain is Small ribosomal subunit protein uS2 from Pseudoalteromonas atlantica (strain T6c / ATCC BAA-1087).